The primary structure comprises 769 residues: Integrin beta-2 (769 aa).

Residues 1–22 form the signal peptide; that stretch reads MLCRCSPLLLLVGLLTLRSALS. Q23 is subject to Pyrrolidone carboxylic acid. Over 23-700 the chain is Extracellular; it reads QECAKYKVST…ETRECVKGPN (678 aa). Residues 24 to 74 form the PSI domain; that stretch reads ECAKYKVSTCRDCIESGPGCAWCQKLNFSGQGEPDSVRCDTREQLLAKGCV. Disulfide bonds link C25-C43, C33-C447, C36-C62, C46-C73, C191-C198, C246-C286, C386-C400, C420-C445, C449-C467, C459-C470, C472-C481, C483-C514, C497-C512, C506-C517, C519-C534, C536-C559, C541-C557, C549-C562, C564-C573, C575-C598, C582-C596, C590-C601, C603-C612, C615-C618, C622-C662, C628-C647, C631-C643, and C670-C695. N50 and N116 each carry an N-linked (GlcNAc...) asparagine glycan. Residues 124–363 enclose the VWFA domain; it reads GYPIDLYYLM…ELIKNAYNKL (240 aa). S136 and S138 together coordinate Mg(2+). The Ca(2+) site is built by S138, D141, D142, and D173. 4 residues coordinate Ca(2+): N229, D231, P233, and E234. A Mg(2+)-binding site is contributed by E234. N254 carries N-linked (GlcNAc...) asparagine glycosylation. Ca(2+) is bound by residues D264 and E347. The Cell attachment site signature appears at 397–399; it reads RGD. I-EGF domains lie at 449–482, 483–535, 536–574, and 575–613; these read CGDS…KHCE, CQTQ…QFCE, CDNM…SACQ, and CLKS…PLCT. N501 is a glycosylation site (N-linked (GlcNAc...) asparagine). The N-linked (GlcNAc...) asparagine glycan is linked to N642. Residues 701–723 traverse the membrane as a helical segment; sequence IAAIVGGTVGGVVLVGIFLLVIW. Over 724-769 the chain is Cytoplasmic; sequence KVLTHLSDLREYKRFEKEKLKSQWNNDNPLFKSATTTVMNPKFAER. 2 positions are modified to phosphoserine: S745 and S756. 2 positions are modified to phosphothreonine: T758 and T760.

Belongs to the integrin beta chain family. In terms of assembly, heterodimer of an alpha and a beta subunit. The ITGB2 beta subunit associates with the ITGAL, ITGAM, ITGAX or ITGAD alpha subunits. Found in a complex with CD177 and ITGAM/CD11b. Interacts with FGR. Interacts with COPS5 and RANBP9. Interacts with FLNA (via filamin repeats 4, 9, 12, 17, 19, 21, and 23). Interacts with THBD. Both Ser-745 and Ser-756 become phosphorylated when T-cells are exposed to phorbol esters. Phosphorylation on Thr-758 (but not on Ser-756) allows interaction with 14-3-3 proteins.

It is found in the cell membrane. The protein resides in the membrane raft. Its function is as follows. Integrin ITGAL/ITGB2 is a receptor for ICAM1, ICAM2, ICAM3 and ICAM4. Integrin ITGAL/ITGB2 is also a receptor for the secreted form of ubiquitin-like protein ISG15; the interaction is mediated by ITGAL. Integrins ITGAM/ITGB2 and ITGAX/ITGB2 are receptors for the iC3b fragment of the third complement component and for fibrinogen. Integrin ITGAX/ITGB2 recognizes the sequence G-P-R in fibrinogen alpha-chain. Integrin ITGAM/ITGB2 recognizes P1 and P2 peptides of fibrinogen gamma chain. Integrin ITGAM/ITGB2 is also a receptor for factor X. Integrin ITGAD/ITGB2 is a receptor for ICAM3 and VCAM1. Contributes to natural killer cell cytotoxicity. Involved in leukocyte adhesion and transmigration of leukocytes including T-cells and neutrophils. Triggers neutrophil transmigration during lung injury through PTK2B/PYK2-mediated activation. Integrin alpha-L/beta-2 in association with ICAM3, contributes to apoptotic neutrophil phagocytosis by macrophages. This Sus scrofa (Pig) protein is Integrin beta-2 (ITGB2).